Reading from the N-terminus, the 289-residue chain is Acetyl-coenzyme A carboxylase carboxyl transferase subunit beta 2 (289 aa).

Residues 25–289 form the CoA carboxyltransferase N-terminal domain; sequence VWTKCPSCEQ…TNKSIQPEAE (265 aa). Zn(2+)-binding residues include C29, C32, C48, and C51. The segment at 29 to 51 adopts a C4-type zinc-finger fold; it reads CPSCEQVLYRIALKENLEVCPKC.

The protein belongs to the AccD/PCCB family. Acetyl-CoA carboxylase is a heterohexamer composed of biotin carboxyl carrier protein (AccB), biotin carboxylase (AccC) and two subunits each of ACCase subunit alpha (AccA) and ACCase subunit beta (AccD). It depends on Zn(2+) as a cofactor.

The protein localises to the cytoplasm. The enzyme catalyses N(6)-carboxybiotinyl-L-lysyl-[protein] + acetyl-CoA = N(6)-biotinyl-L-lysyl-[protein] + malonyl-CoA. It functions in the pathway lipid metabolism; malonyl-CoA biosynthesis; malonyl-CoA from acetyl-CoA: step 1/1. Functionally, component of the acetyl coenzyme A carboxylase (ACC) complex. Biotin carboxylase (BC) catalyzes the carboxylation of biotin on its carrier protein (BCCP) and then the CO(2) group is transferred by the transcarboxylase to acetyl-CoA to form malonyl-CoA. The sequence is that of Acetyl-coenzyme A carboxylase carboxyl transferase subunit beta 2 from Vibrio campbellii (strain ATCC BAA-1116).